We begin with the raw amino-acid sequence, 257 residues long: Acetyl-coenzyme A carboxylase carboxyl transferase subunit beta (257 aa).

The 253-residue stretch at 5-257 folds into the CoA carboxyltransferase N-terminal domain; the sequence is VFTKCERCKQ…DLERLLGFVG (253 aa). Cys-9, Cys-12, Cys-28, and Cys-31 together coordinate Zn(2+). The segment at 9–31 adopts a C4-type zinc-finger fold; the sequence is CERCKQPVYEKDLRARFNVCPNC.

Belongs to the AccD/PCCB family. In terms of assembly, acetyl-CoA carboxylase is a heterohexamer composed of biotin carboxyl carrier protein (AccB), biotin carboxylase (AccC) and two subunits each of ACCase subunit alpha (AccA) and ACCase subunit beta (AccD). Requires Zn(2+) as cofactor.

It is found in the cytoplasm. The enzyme catalyses N(6)-carboxybiotinyl-L-lysyl-[protein] + acetyl-CoA = N(6)-biotinyl-L-lysyl-[protein] + malonyl-CoA. The protein operates within lipid metabolism; malonyl-CoA biosynthesis; malonyl-CoA from acetyl-CoA: step 1/1. Functionally, component of the acetyl coenzyme A carboxylase (ACC) complex. Biotin carboxylase (BC) catalyzes the carboxylation of biotin on its carrier protein (BCCP) and then the CO(2) group is transferred by the transcarboxylase to acetyl-CoA to form malonyl-CoA. The protein is Acetyl-coenzyme A carboxylase carboxyl transferase subunit beta of Rubrobacter xylanophilus (strain DSM 9941 / JCM 11954 / NBRC 16129 / PRD-1).